Reading from the N-terminus, the 157-residue chain is DNA gyrase inhibitor (157 aa).

This sequence belongs to the DNA gyrase inhibitor family. As to quaternary structure, interacts with DNA gyrase.

The protein localises to the cytoplasm. Its function is as follows. Inhibits the supercoiling activity of DNA gyrase. Acts by inhibiting DNA gyrase at an early step, prior to (or at the step of) binding of DNA by the gyrase. It protects cells against toxins that target DNA gyrase, by inhibiting activity of these toxins and reducing the formation of lethal double-strand breaks in the cell. This is DNA gyrase inhibitor from Klebsiella pneumoniae (strain 342).